Consider the following 105-residue polypeptide: uncharacterized protein (105 aa).

A disordered region spans residues 81–105 (NNNNKTITVDNNNNNNNNNNNNNNK).

This is an uncharacterized protein from Dictyostelium discoideum (Social amoeba).